Consider the following 239-residue polypeptide: Alpha-acetolactate decarboxylase (239 aa).

Belongs to the alpha-acetolactate decarboxylase family.

The catalysed reaction is (2S)-2-acetolactate + H(+) = (R)-acetoin + CO2. Its pathway is polyol metabolism; (R,R)-butane-2,3-diol biosynthesis; (R,R)-butane-2,3-diol from pyruvate: step 2/3. With respect to regulation, the enzyme is active only in the presence of branched-chain amino acids. Valine results in much higher activation than leucine or isoleucine. Its function is as follows. Converts acetolactate into acetoin. Regulates leucine and valine biosynthesis by diverting the flux of alpha-acetolactate towards acetoin when the branched-chain amino acids are present in high concentration. This chain is Alpha-acetolactate decarboxylase (aldC), found in Streptococcus thermophilus.